Here is a 176-residue protein sequence, read N- to C-terminus: Salivary antigen 1 (176 aa).

The signal sequence occupies residues 1 to 18 (MNYCFLVFLVYLVFAVNG).

Its subcellular location is the secreted. The chain is Salivary antigen 1 from Ctenocephalides felis (Cat flea).